Consider the following 173-residue polypeptide: Crossover junction endodeoxyribonuclease RuvC (173 aa).

Catalysis depends on residues Asp8, Glu67, and Asp139. Residues Asp8, Glu67, and Asp139 each coordinate Mg(2+).

This sequence belongs to the RuvC family. As to quaternary structure, homodimer which binds Holliday junction (HJ) DNA. The HJ becomes 2-fold symmetrical on binding to RuvC with unstacked arms; it has a different conformation from HJ DNA in complex with RuvA. In the full resolvosome a probable DNA-RuvA(4)-RuvB(12)-RuvC(2) complex forms which resolves the HJ. Requires Mg(2+) as cofactor.

It is found in the cytoplasm. The catalysed reaction is Endonucleolytic cleavage at a junction such as a reciprocal single-stranded crossover between two homologous DNA duplexes (Holliday junction).. In terms of biological role, the RuvA-RuvB-RuvC complex processes Holliday junction (HJ) DNA during genetic recombination and DNA repair. Endonuclease that resolves HJ intermediates. Cleaves cruciform DNA by making single-stranded nicks across the HJ at symmetrical positions within the homologous arms, yielding a 5'-phosphate and a 3'-hydroxyl group; requires a central core of homology in the junction. The consensus cleavage sequence is 5'-(A/T)TT(C/G)-3'. Cleavage occurs on the 3'-side of the TT dinucleotide at the point of strand exchange. HJ branch migration catalyzed by RuvA-RuvB allows RuvC to scan DNA until it finds its consensus sequence, where it cleaves and resolves the cruciform DNA. In Sodalis glossinidius (strain morsitans), this protein is Crossover junction endodeoxyribonuclease RuvC.